We begin with the raw amino-acid sequence, 353 residues long: UDP-N-acetylglucosamine--N-acetylmuramyl-(pentapeptide) pyrophosphoryl-undecaprenol N-acetylglucosamine transferase (353 aa).

Residues 10-12 (TGG), asparagine 124, serine 183, and glutamine 283 contribute to the UDP-N-acetyl-alpha-D-glucosamine site.

It belongs to the glycosyltransferase 28 family. MurG subfamily.

The protein localises to the cell inner membrane. The enzyme catalyses di-trans,octa-cis-undecaprenyl diphospho-N-acetyl-alpha-D-muramoyl-L-alanyl-D-glutamyl-meso-2,6-diaminopimeloyl-D-alanyl-D-alanine + UDP-N-acetyl-alpha-D-glucosamine = di-trans,octa-cis-undecaprenyl diphospho-[N-acetyl-alpha-D-glucosaminyl-(1-&gt;4)]-N-acetyl-alpha-D-muramoyl-L-alanyl-D-glutamyl-meso-2,6-diaminopimeloyl-D-alanyl-D-alanine + UDP + H(+). It participates in cell wall biogenesis; peptidoglycan biosynthesis. Functionally, cell wall formation. Catalyzes the transfer of a GlcNAc subunit on undecaprenyl-pyrophosphoryl-MurNAc-pentapeptide (lipid intermediate I) to form undecaprenyl-pyrophosphoryl-MurNAc-(pentapeptide)GlcNAc (lipid intermediate II). This chain is UDP-N-acetylglucosamine--N-acetylmuramyl-(pentapeptide) pyrophosphoryl-undecaprenol N-acetylglucosamine transferase, found in Helicobacter pylori (strain G27).